The following is a 416-amino-acid chain: Tyrosine--tRNA ligase (416 aa).

An L-tyrosine-binding site is contributed by Tyr39. The 'HIGH' region signature appears at 44–53 (CTAPSLHAGH). L-tyrosine contacts are provided by Tyr176 and Gln180. The 'KMSKS' region motif lies at 236-240 (KMGKT). An ATP-binding site is contributed by Lys239. An S4 RNA-binding domain is found at 349-414 (ISLVDLLHDT…AGKKRHIKVV (66 aa)).

This sequence belongs to the class-I aminoacyl-tRNA synthetase family. TyrS type 1 subfamily. As to quaternary structure, homodimer.

The protein resides in the cytoplasm. It carries out the reaction tRNA(Tyr) + L-tyrosine + ATP = L-tyrosyl-tRNA(Tyr) + AMP + diphosphate + H(+). Catalyzes the attachment of tyrosine to tRNA(Tyr) in a two-step reaction: tyrosine is first activated by ATP to form Tyr-AMP and then transferred to the acceptor end of tRNA(Tyr). This chain is Tyrosine--tRNA ligase, found in Wolbachia pipientis wMel.